The following is a 460-amino-acid chain: Citrate synthase, peroxisomal (460 aa).

Ser21 bears the Phosphoserine mark. Glycyl lysine isopeptide (Lys-Gly) (interchain with G-Cter in ubiquitin) cross-links involve residues Lys218 and Lys239. Residues His293 and His339 contribute to the active site. Residues Lys354 and Lys385 each participate in a glycyl lysine isopeptide (Lys-Gly) (interchain with G-Cter in ubiquitin) cross-link. Asp394 is an active-site residue. The short motif at 458–460 (SKL) is the C-terminal peroxisome targeting signal (PTS1) element.

Belongs to the citrate synthase family. In terms of assembly, interacts with F-box protein UCC1. Ubiquitinated by the E3 ubiquitin-protein ligase complex SCF(UCC1), which leads to its degradation by the proteasome. Ubiquitination is prevented by oxaloacetate, suggesting the existence of an oxaloacetate-dependent positive feedback loop that stabilizes CIT2.

The protein localises to the cytoplasm. The protein resides in the peroxisome. The enzyme catalyses oxaloacetate + acetyl-CoA + H2O = citrate + CoA + H(+). Its pathway is carbohydrate metabolism; tricarboxylic acid cycle; isocitrate from oxaloacetate: step 1/2. In terms of biological role, peroxisomal citrate synthase involved in the citrate homeostasis. Catalyzes the condensation of acetyl coenzyme A and oxaloacetate to form citrate. Citrate synthase is the rate-limiting enzyme of the tricarboxylic acid (TCA) cycle. The polypeptide is Citrate synthase, peroxisomal (Saccharomyces cerevisiae (strain ATCC 204508 / S288c) (Baker's yeast)).